We begin with the raw amino-acid sequence, 482 residues long: tRNA sulfurtransferase (482 aa).

Residues 61 to 165 form the THUMP domain; the sequence is LAIRDALTRI…DDRLLLIKGR (105 aa). ATP-binding positions include 183-184, K265, G287, and Q296; that span reads LI. C344 and C456 are oxidised to a cystine. The region spanning 404 to 482 is the Rhodanese domain; that stretch reads FGPNDVILDI…GFENVKAYRP (79 aa). The Cysteine persulfide intermediate role is filled by C456.

Belongs to the ThiI family.

It localises to the cytoplasm. It carries out the reaction [ThiI sulfur-carrier protein]-S-sulfanyl-L-cysteine + a uridine in tRNA + 2 reduced [2Fe-2S]-[ferredoxin] + ATP + H(+) = [ThiI sulfur-carrier protein]-L-cysteine + a 4-thiouridine in tRNA + 2 oxidized [2Fe-2S]-[ferredoxin] + AMP + diphosphate. The enzyme catalyses [ThiS sulfur-carrier protein]-C-terminal Gly-Gly-AMP + S-sulfanyl-L-cysteinyl-[cysteine desulfurase] + AH2 = [ThiS sulfur-carrier protein]-C-terminal-Gly-aminoethanethioate + L-cysteinyl-[cysteine desulfurase] + A + AMP + 2 H(+). It participates in cofactor biosynthesis; thiamine diphosphate biosynthesis. In terms of biological role, catalyzes the ATP-dependent transfer of a sulfur to tRNA to produce 4-thiouridine in position 8 of tRNAs, which functions as a near-UV photosensor. Also catalyzes the transfer of sulfur to the sulfur carrier protein ThiS, forming ThiS-thiocarboxylate. This is a step in the synthesis of thiazole, in the thiamine biosynthesis pathway. The sulfur is donated as persulfide by IscS. The polypeptide is tRNA sulfurtransferase (Salmonella gallinarum (strain 287/91 / NCTC 13346)).